The chain runs to 417 residues: Serine hydroxymethyltransferase (417 aa).

(6S)-5,6,7,8-tetrahydrofolate-binding positions include leucine 112 and 116–118 (GHL). Lysine 221 carries the N6-(pyridoxal phosphate)lysine modification. Glutamate 247 serves as a coordination point for (6S)-5,6,7,8-tetrahydrofolate.

It belongs to the SHMT family. In terms of assembly, homodimer. It depends on pyridoxal 5'-phosphate as a cofactor.

The protein localises to the cytoplasm. It catalyses the reaction (6R)-5,10-methylene-5,6,7,8-tetrahydrofolate + glycine + H2O = (6S)-5,6,7,8-tetrahydrofolate + L-serine. The protein operates within one-carbon metabolism; tetrahydrofolate interconversion. Its pathway is amino-acid biosynthesis; glycine biosynthesis; glycine from L-serine: step 1/1. In terms of biological role, catalyzes the reversible interconversion of serine and glycine with tetrahydrofolate (THF) serving as the one-carbon carrier. This reaction serves as the major source of one-carbon groups required for the biosynthesis of purines, thymidylate, methionine, and other important biomolecules. Also exhibits THF-independent aldolase activity toward beta-hydroxyamino acids, producing glycine and aldehydes, via a retro-aldol mechanism. This Borrelia turicatae (strain 91E135) protein is Serine hydroxymethyltransferase.